We begin with the raw amino-acid sequence, 498 residues long: NAD(P)H-quinone oxidoreductase subunit 2, chloroplastic (498 aa).

A run of 14 helical transmembrane segments spans residues 18–38 (LTIL…VIDL), 51–71 (ISMV…GFFT), 87–107 (FFLL…ILCS), 111–131 (LAEF…LSCA), 134–154 (LVTI…LSGY), 168–188 (FLLM…LLYG), 211–231 (IIYL…SLFP), 244–264 (PTPV…ALFT), 278–298 (WHVA…LIAV), 306–326 (MLAF…LSAD), 337–357 (YTFI…LFGL), 379–399 (FSLV…GFFG), 411–431 (GLYS…YYYL), and 470–490 (IAMI…DPII).

It belongs to the complex I subunit 2 family. In terms of assembly, NDH is composed of at least 16 different subunits, 5 of which are encoded in the nucleus.

It localises to the plastid. Its subcellular location is the chloroplast thylakoid membrane. The enzyme catalyses a plastoquinone + NADH + (n+1) H(+)(in) = a plastoquinol + NAD(+) + n H(+)(out). It carries out the reaction a plastoquinone + NADPH + (n+1) H(+)(in) = a plastoquinol + NADP(+) + n H(+)(out). In terms of biological role, NDH shuttles electrons from NAD(P)H:plastoquinone, via FMN and iron-sulfur (Fe-S) centers, to quinones in the photosynthetic chain and possibly in a chloroplast respiratory chain. The immediate electron acceptor for the enzyme in this species is believed to be plastoquinone. Couples the redox reaction to proton translocation, and thus conserves the redox energy in a proton gradient. The sequence is that of NAD(P)H-quinone oxidoreductase subunit 2, chloroplastic from Adiantum capillus-veneris (Maidenhair fern).